We begin with the raw amino-acid sequence, 100 residues long: MSRVCDITGQTKSFGNKVSHSNRKTKRTYLVNLHNVTLFSDVLNRKFRFKISSRTLRTIDYKGGLDLYLLETSSRKLSDKAQKIKKMIKKATAENAKVSL.

This sequence belongs to the bacterial ribosomal protein bL28 family.

The polypeptide is Large ribosomal subunit protein bL28 (Ehrlichia ruminantium (strain Welgevonden)).